The sequence spans 522 residues: Calcium-dependent protein kinase 14 (522 aa).

Composition is skewed to low complexity over residues 1 to 12 and 19 to 45; these read MGNCCPPGSSSE and SSGS…AAPA. Residues 1-58 form a disordered region; that stretch reads MGNCCPPGSSSEPDPPPASSGSSRPAGSAGAAASPATISPSAAPAPAKPPAPIGPVLG. Gly2 is lipidated: N-myristoyl glycine. The Protein kinase domain occupies 68-326; that stretch reads YTVGKELGRG…AYDVLNHPWI (259 aa). ATP is bound by residues 74–82 and Lys97; that span reads LGRGQFGVT. The active-site Proton acceptor is the Asp192. The segment at 332–362 is autoinhibitory domain; sequence APDTPLDNAVLGRLKQFRAMNQFKKAALRVI. EF-hand domains follow at residues 369 to 404, 405 to 440, 441 to 476, and 480 to 511; these read EEIR…KGTK, LTEA…MNRM, DREE…KGLM, and EIKD…GDPE. Ca(2+)-binding residues include Asp382, Asp384, Ser386, Thr388, Glu393, Asp418, Asp420, Asn422, Thr424, Glu429, Asp454, Asp456, Ser458, Tyr460, Glu465, Asp489, Asp491, Asp493, Arg495, and Glu500.

It belongs to the protein kinase superfamily. Ser/Thr protein kinase family. CDPK subfamily.

It is found in the membrane. It catalyses the reaction L-seryl-[protein] + ATP = O-phospho-L-seryl-[protein] + ADP + H(+). It carries out the reaction L-threonyl-[protein] + ATP = O-phospho-L-threonyl-[protein] + ADP + H(+). With respect to regulation, activated by calcium. Autophosphorylation may play an important role in the regulation of the kinase activity. May play a role in signal transduction pathways that involve calcium as a second messenger. In Oryza sativa subsp. japonica (Rice), this protein is Calcium-dependent protein kinase 14.